The following is a 143-amino-acid chain: MSLQPFFGFPPTVNDLFSDFVSYSPRLNNQIPGELSPSIDVHEGKDTVSVDVELPGVKKEDVQVHYDSGKLTISGEVVNERKNESTEGNQRWSERRFGSFSRTITIPAKIDADRIEANFSNGLLTVTLPKVEKSQTKKQIAIK.

Residues 30 to 143 (QIPGELSPSI…SQTKKQIAIK (114 aa)) enclose the sHSP domain.

The protein belongs to the small heat shock protein (HSP20) family.

Its subcellular location is the cytoplasm. It is found in the nucleus. The chain is Heat shock protein 16 (hsp16) from Schizosaccharomyces pombe (strain 972 / ATCC 24843) (Fission yeast).